The sequence spans 278 residues: Tryptophan synthase alpha chain (278 aa).

Active-site proton acceptor residues include Glu-49 and Asp-60.

Belongs to the TrpA family. As to quaternary structure, tetramer of two alpha and two beta chains.

It catalyses the reaction (1S,2R)-1-C-(indol-3-yl)glycerol 3-phosphate + L-serine = D-glyceraldehyde 3-phosphate + L-tryptophan + H2O. Its pathway is amino-acid biosynthesis; L-tryptophan biosynthesis; L-tryptophan from chorismate: step 5/5. Functionally, the alpha subunit is responsible for the aldol cleavage of indoleglycerol phosphate to indole and glyceraldehyde 3-phosphate. The polypeptide is Tryptophan synthase alpha chain (Corynebacterium diphtheriae (strain ATCC 700971 / NCTC 13129 / Biotype gravis)).